The following is a 255-amino-acid chain: MAVGNINELPENILLELFTHVPARQLLLNCRLVCSLWRDLIDLVTLWKRKCLREGFITEDWDQPVADWKIFYFLRSLHRNLLHNPCAEEGFEFWSLDVNGGDEWKVEDLSRDQRKEFPNDQVKKYFVTSYYTCLKSQVVDLKAEGYWEELMDTTRPDIEVKDWFAARPDCGSKYQLCVQLLSSAHAPLGTFQPDPATIQQKSDAKWREVSHTFSNYPPGVRYIWFQHGGVDTHYWAGWYGPRVTNSSITIGPPLP.

The F-box domain maps to 3–50 (VGNINELPENILLELFTHVPARQLLLNCRLVCSLWRDLIDLVTLWKRK). Positions 71-252 (FYFLRSLHRN…VTNSSITIGP (182 aa)) constitute an FBA domain.

Part of a SCF (SKP1-cullin-F-box) protein ligase complex. Interacts with SKP1 and CUL1. Abundantly expressed in brain and kidney. Expressed at lower levels in heart, spleen and liver.

Substrate-recognition component of the SCF (SKP1-CUL1-F-box protein)-type E3 ubiquitin ligase complex. This Homo sapiens (Human) protein is F-box only protein 44 (FBXO44).